The chain runs to 113 residues: ATP-dependent Clp protease adapter protein ClpS (113 aa).

A disordered region spans residues 1–24 (MTAQLHMMSDKHDQDNDASVLLQT).

This sequence belongs to the ClpS family. As to quaternary structure, binds to the N-terminal domain of the chaperone ClpA.

In terms of biological role, involved in the modulation of the specificity of the ClpAP-mediated ATP-dependent protein degradation. The polypeptide is ATP-dependent Clp protease adapter protein ClpS (Ruegeria pomeroyi (strain ATCC 700808 / DSM 15171 / DSS-3) (Silicibacter pomeroyi)).